The following is a 114-amino-acid chain: Non-specific lipid-transfer protein 1 (114 aa).

The signal sequence occupies residues 1–23 (MEIAGKIACFVVLCMVVAAPCAE). 4 disulfide bridges follow: cysteine 27–cysteine 73, cysteine 37–cysteine 50, cysteine 51–cysteine 96, and cysteine 71–cysteine 110.

It belongs to the plant LTP family. As to expression, high expression in leaf epidermis and shoot apex, and also in root epidermis during seedling germination.

Its function is as follows. Plant non-specific lipid-transfer proteins transfer phospholipids as well as galactolipids across membranes. Binds cis-unsaturated fatty acids and jasmonic acid with a higher affinity than linear chain fatty acids. Formation of the complex with jasmonic acid results in a conformational change facilitating the LPT1 binding on the elicitin plasma membrane receptor that is known to be involved in plant defense induction. May also play a role in wax or cutin deposition in the cell walls of expanding epidermal cells and certain secretory tissues. The protein is Non-specific lipid-transfer protein 1 (LTP1) of Nicotiana tabacum (Common tobacco).